The sequence spans 468 residues: Glutamate--tRNA ligase 2 (468 aa).

A 'HIGH' region motif is present at residues 9–19 (PSPTGSLHLGG). A 'KMSKS' region motif is present at residues 238-242 (KLSKR). Lys-241 serves as a coordination point for ATP.

The protein belongs to the class-I aminoacyl-tRNA synthetase family. Glutamate--tRNA ligase type 1 subfamily. In terms of assembly, monomer.

It is found in the cytoplasm. It carries out the reaction tRNA(Glu) + L-glutamate + ATP = L-glutamyl-tRNA(Glu) + AMP + diphosphate. Its function is as follows. Catalyzes the attachment of glutamate to tRNA(Glu) in a two-step reaction: glutamate is first activated by ATP to form Glu-AMP and then transferred to the acceptor end of tRNA(Glu). The protein is Glutamate--tRNA ligase 2 of Anaplasma phagocytophilum (strain HZ).